The following is a 95-amino-acid chain: Large ribosomal subunit protein bL25 (95 aa).

This sequence belongs to the bacterial ribosomal protein bL25 family. In terms of assembly, part of the 50S ribosomal subunit; part of the 5S rRNA/L5/L18/L25 subcomplex. Contacts the 5S rRNA. Binds to the 5S rRNA independently of L5 and L18.

In terms of biological role, this is one of the proteins that binds to the 5S RNA in the ribosome where it forms part of the central protuberance. This chain is Large ribosomal subunit protein bL25, found in Shewanella woodyi (strain ATCC 51908 / MS32).